The sequence spans 613 residues: Cleavage and polyadenylation specificity factor subunit 3-II (613 aa).

The HXHXDH motif motif lies at 67-72 (HFHMDH).

The protein belongs to the metallo-beta-lactamase superfamily. RNA-metabolizing metallo-beta-lactamase-like family. INTS11 subfamily. In terms of assembly, component of the CPSF complex, at least composed of CPSF160, CPSF100, CPSF73-I, CPSF73-II, CPSF30, FY and FIPS5. Interacts with CPSF30, CPSF100, CPSF160 and FY. As to expression, highly expressed in senescence leaves, petals, stamens, pollen and late stages of siliques with seeds. Also detected in roots, stems, leaves and seedlings.

Its subcellular location is the nucleus. Functionally, component of the cleavage and polyadenylation specificity factor (CPSF) complex that play a key role in pre-mRNA 3'-end formation, recognizing the AAUAAA signal sequence and interacting with poly(A) polymerase and other factors to bring about cleavage and poly(A) addition. May function as mRNA 3'-end-processing endonuclease and also be involved in the histone 3'-end pre-mRNA processing. This is Cleavage and polyadenylation specificity factor subunit 3-II (CPSF73-II) from Arabidopsis thaliana (Mouse-ear cress).